Reading from the N-terminus, the 443-residue chain is Probable cytosolic iron-sulfur protein assembly protein 1 (443 aa).

2 disordered regions span residues 1-27 and 95-124; these read MSDPRPNTLSPLATLTPPSSSRTWQTA and REEQGGNEDDFTNRRVGGAEDEDGRDDDDE. Residues 8-21 show a composition bias toward low complexity; that stretch reads TLSPLATLTPPSSS. 2 WD repeats span residues 14-57 and 61-103; these read TLTP…LLHS and GHKR…GNED. A compositionally biased stretch (acidic residues) spans 113 to 124; it reads AEDEDGRDDDDE. WD repeat units follow at residues 135-174, 180-219, 221-248, 255-294, 323-362, and 391-440; these read GHESEIKSLSWSPTGQYLATCSRDKSVWIWEELEDDNFET, EHDGDVKCVAWHPEEDLLASASYDDSVRLYREDSDDWVQV, CIAGKEGHGMTVWWVEFEGSGISGKDFR, SEEQTQHVDSMERSGPRLATCSDDRTVRIWRRKPRERAEN, VHERAIYSVSWSRTTGLIASAGSDGKIIIYKERWRKQTPN, and AHSV…DPPQ.

Belongs to the WD repeat CIA1 family.

Functionally, essential component of the cytosolic iron-sulfur (Fe/S) protein assembly machinery. Required for the maturation of extramitochondrial Fe/S proteins. The sequence is that of Probable cytosolic iron-sulfur protein assembly protein 1 from Phaeosphaeria nodorum (strain SN15 / ATCC MYA-4574 / FGSC 10173) (Glume blotch fungus).